The sequence spans 221 residues: Ras-related protein RABA5a (221 aa).

Residue 21–28 (GDSAVGKS) coordinates GTP. The short motif at 43–51 (SKSTIGVEF) is the Effector region element. GTP-binding positions include 69 to 73 (DTAGQ), 127 to 130 (NKSD), and 157 to 158 (SA). Residues C218 and C219 are each lipidated (S-geranylgeranyl cysteine).

Belongs to the small GTPase superfamily. Rab family.

The protein resides in the cell membrane. Its function is as follows. Intracellular vesicle trafficking and protein transport. The sequence is that of Ras-related protein RABA5a (RABA5A) from Arabidopsis thaliana (Mouse-ear cress).